The chain runs to 432 residues: DnaJ-like protein 1 (432 aa).

The J domain maps to 4–73 (DTEYYDLLGV…RAKYDKYGRK (70 aa)). Positions 117-187 (NAEDEAEKEK…KKNEQVGAEA (71 aa)) are disordered.

It belongs to the DnaJ family. Interacts with SLN1.

It localises to the cytoplasm. Its function is as follows. Required for peroxisomal protein import which maintains the function of peroxisomes. The sequence is that of DnaJ-like protein 1 (DJP1) from Saccharomyces cerevisiae (strain ATCC 204508 / S288c) (Baker's yeast).